We begin with the raw amino-acid sequence, 705 residues long: Elongation factor G (705 aa).

The 283-residue stretch at 8 to 290 folds into the tr-type G domain; that stretch reads EKYRNIGICA…GVVEYLPAPN (283 aa). GTP is bound by residues 17–24, 88–92, and 142–145; these read AHVDAGKT, DTPGH, and NKMD.

The protein belongs to the TRAFAC class translation factor GTPase superfamily. Classic translation factor GTPase family. EF-G/EF-2 subfamily.

It is found in the cytoplasm. Its function is as follows. Catalyzes the GTP-dependent ribosomal translocation step during translation elongation. During this step, the ribosome changes from the pre-translocational (PRE) to the post-translocational (POST) state as the newly formed A-site-bound peptidyl-tRNA and P-site-bound deacylated tRNA move to the P and E sites, respectively. Catalyzes the coordinated movement of the two tRNA molecules, the mRNA and conformational changes in the ribosome. This is Elongation factor G from Francisella philomiragia subsp. philomiragia (strain ATCC 25017 / CCUG 19701 / FSC 153 / O#319-036).